Reading from the N-terminus, the 336-residue chain is tRNA N6-adenosine threonylcarbamoyltransferase (336 aa).

Residues histidine 114 and histidine 118 each contribute to the Fe cation site. Residues 136-140 (LVSGG), aspartate 169, glycine 182, aspartate 186, and asparagine 275 each bind substrate. Residue aspartate 301 coordinates Fe cation.

It belongs to the KAE1 / TsaD family. Fe(2+) is required as a cofactor.

Its subcellular location is the cytoplasm. It carries out the reaction L-threonylcarbamoyladenylate + adenosine(37) in tRNA = N(6)-L-threonylcarbamoyladenosine(37) in tRNA + AMP + H(+). In terms of biological role, required for the formation of a threonylcarbamoyl group on adenosine at position 37 (t(6)A37) in tRNAs that read codons beginning with adenine. Is involved in the transfer of the threonylcarbamoyl moiety of threonylcarbamoyl-AMP (TC-AMP) to the N6 group of A37, together with TsaE and TsaB. TsaD likely plays a direct catalytic role in this reaction. The sequence is that of tRNA N6-adenosine threonylcarbamoyltransferase from Streptococcus sanguinis (strain SK36).